The primary structure comprises 328 residues: Tetraacyldisaccharide 4'-kinase (328 aa).

55–62 is an ATP binding site; that stretch reads TAGGNGKT.

Belongs to the LpxK family.

The catalysed reaction is a lipid A disaccharide + ATP = a lipid IVA + ADP + H(+). It functions in the pathway glycolipid biosynthesis; lipid IV(A) biosynthesis; lipid IV(A) from (3R)-3-hydroxytetradecanoyl-[acyl-carrier-protein] and UDP-N-acetyl-alpha-D-glucosamine: step 6/6. Its function is as follows. Transfers the gamma-phosphate of ATP to the 4'-position of a tetraacyldisaccharide 1-phosphate intermediate (termed DS-1-P) to form tetraacyldisaccharide 1,4'-bis-phosphate (lipid IVA). The sequence is that of Tetraacyldisaccharide 4'-kinase from Shigella boydii serotype 4 (strain Sb227).